The following is a 185-amino-acid chain: Ribosome-recycling factor (185 aa).

The protein belongs to the RRF family.

Its subcellular location is the cytoplasm. Its function is as follows. Responsible for the release of ribosomes from messenger RNA at the termination of protein biosynthesis. May increase the efficiency of translation by recycling ribosomes from one round of translation to another. This Parafrankia sp. (strain EAN1pec) protein is Ribosome-recycling factor.